A 255-amino-acid chain; its full sequence is Hydroxyacylglutathione hydrolase (255 aa).

Positions 56, 58, 60, 61, 114, 133, and 171 each coordinate Zn(2+).

This sequence belongs to the metallo-beta-lactamase superfamily. Glyoxalase II family. Monomer. The cofactor is Zn(2+).

It catalyses the reaction an S-(2-hydroxyacyl)glutathione + H2O = a 2-hydroxy carboxylate + glutathione + H(+). Its pathway is secondary metabolite metabolism; methylglyoxal degradation; (R)-lactate from methylglyoxal: step 2/2. In terms of biological role, thiolesterase that catalyzes the hydrolysis of S-D-lactoyl-glutathione to form glutathione and D-lactic acid. This chain is Hydroxyacylglutathione hydrolase, found in Rhodopseudomonas palustris (strain BisB18).